Consider the following 494-residue polypeptide: Glutamyl-tRNA(Gln) amidotransferase subunit A (494 aa).

Residues Lys80 and Ser160 each act as charge relay system in the active site. Residues 140-168 (GNVISPWRRPGDTAPLAPGGSSGGSSSAV) form a disordered region. The active-site Acyl-ester intermediate is Ser184.

Belongs to the amidase family. GatA subfamily. Heterotrimer of A, B and C subunits.

The catalysed reaction is L-glutamyl-tRNA(Gln) + L-glutamine + ATP + H2O = L-glutaminyl-tRNA(Gln) + L-glutamate + ADP + phosphate + H(+). Functionally, allows the formation of correctly charged Gln-tRNA(Gln) through the transamidation of misacylated Glu-tRNA(Gln) in organisms which lack glutaminyl-tRNA synthetase. The reaction takes place in the presence of glutamine and ATP through an activated gamma-phospho-Glu-tRNA(Gln). The polypeptide is Glutamyl-tRNA(Gln) amidotransferase subunit A (Novosphingobium aromaticivorans (strain ATCC 700278 / DSM 12444 / CCUG 56034 / CIP 105152 / NBRC 16084 / F199)).